The primary structure comprises 526 residues: Peptide chain release factor 3 (526 aa).

The tr-type G domain maps to 9–277; it reads DKRRTFAIIS…GIVEWAPKPQ (269 aa). GTP-binding positions include 18–25, 86–90, and 140–143; these read SHPDAGKT, DTPGH, and NKLD.

The protein belongs to the TRAFAC class translation factor GTPase superfamily. Classic translation factor GTPase family. PrfC subfamily.

It localises to the cytoplasm. In terms of biological role, increases the formation of ribosomal termination complexes and stimulates activities of RF-1 and RF-2. It binds guanine nucleotides and has strong preference for UGA stop codons. It may interact directly with the ribosome. The stimulation of RF-1 and RF-2 is significantly reduced by GTP and GDP, but not by GMP. This is Peptide chain release factor 3 from Shewanella sediminis (strain HAW-EB3).